The sequence spans 90 residues: Large ribosomal subunit protein bL27 (90 aa).

This sequence belongs to the bacterial ribosomal protein bL27 family.

The chain is Large ribosomal subunit protein bL27 from Rhodopseudomonas palustris (strain BisB5).